Reading from the N-terminus, the 1426-residue chain is MVAPVLKSFQAEVVALSKRSREAEAAFLSVYKQLIEAPDPVPSFEVARTLDDRLQRPSFDPSGQRLQDVHIAWKRCPEPPSAREQNEGTCPTGHTPANGNHLPGPEDTLVTDTLLQKNEAERQKGLQEVHITLAARLGEAEEKIKVLHSALKATQTELLELRRKYDEEAASKADEVGLIMTNLEKANQRAEAAQREVESLREQLASVNSSIRLACCSPQGPSGEKVSFALCSGPRLEAALASKDREILRLLKDAQQLRHSLQELEEVSANQIADLERQLAAKSEAIEKLQEKLEAQADYEEIKTELSILRAMKLASSTCSLPQTLAKPDDPLLVAKDVFFPTQKFLLEKPALLASPEEDPSEDDSIKGSLGTEPPYPPQLPPPPGPEDPLSPSPAQPLLGPSLGPDGPRTFSLSPFPSLAPGERLAGDSLLSKHMMGPAAFKGETGNLLAFPPTFYGGAKPPSAPAASVPCPEPTGAPEAVDGAGPEEEQLDTAEIAFQVKEQLLKHNIGQRVFGHYVLGLSQGSVSEILARPKPWRKLTVKGKEPFIKMKQFLSDEQNVLALRTIQVRQRGSITPRIRTPETGSDDAIKSILEQAKKEIESQKGGESKNSPASVSIPNGTASSSTSEDAIKNILEQARREMQAQQQALLEMESGPRGRSVPPSPPERPSPATASQNGALTCVKQEDGGGGSGSSSTVQAPLAVLSPAAFVQRIIRKVKSEIGDAGYFDHHWASDRGLLSRPYASVSPSLSSSSSYSGQPNGRAWPRGDEATIAPEDEAAMGEDEAPRVGELKAEAGAPEVGGGRLPYYPAYVPRTLKPTVPPLTPEQYELYMYREVDTLELTRQVKEKLAKNGICQRIFGEKVLGLSQGSVSDMLSRPKPWSKLTQKGREPFIRMQLWLSDQLGQGQGQAPTQQPSASQASPTEPTSSPSPPPSPTEPEKTSQEPLGLSLESSKENQQPEGRASSSLGGKPFSSSQAAGGIQEMVAMSPELDTYSITKRVKEVLTDNNLGQRLFGESILGLTQGSVSDLLSRPKPWHKLSLKGREPFVRMQLWLSDPHNVEKLRDMKKLEKKAYLKRRYGLIGTGSDSESPAAHSECPSPCLQPQELSLMQAKKPRVVLAPAEKEALRKAYQLEPYPSQQTIELLSFQLNLKTNTVINWFHNYRSRMRREMLVEGTQDDPDFDPSGGPNVLTPGHTHREPTPQSPDSETEDQKPPMKSLELQEPEGPLQRAAPDRALVKIKQEEGLEVDGDSQPQDVGDPDRGQDGPKEEHTHPLGNSDLSELAPGPFLSGTPNPDCPSLHNPQEKGTGEQVHSEPLSFKSTSESSCCSLEGPPNSPSVISSPDLTTCVSPAPSSSAPISPSLPGAPPAKVPSTSPTGDTAAALHPSTKVNPNLQRRHEKMANLNSIIYRLERAANREEVLEWEF.

The disordered stretch occupies residues 77-104; the sequence is PEPPSAREQNEGTCPTGHTPANGNHLPG. Ser-81 is modified (phosphoserine). Residues 131-311 adopt a coiled-coil conformation; it reads ITLAARLGEA…IKTELSILRA (181 aa). 6 disordered regions span residues 351 to 419, 460 to 488, 599 to 628, 653 to 676, 743 to 769, and 904 to 977; these read ALLA…FPSL, KPPS…GPEE, EIES…STSE, ESGP…TASQ, YASV…PRGD, and LGQG…SSSQ. Over residues 374–395 the composition is skewed to pro residues; that stretch reads PPYPPQLPPPPGPEDPLSPSPA. Composition is skewed to low complexity over residues 397-408 and 460-470; these read PLLGPSLGPDGP and KPPSAPAASVP. Residues 482–569 constitute a DNA-binding region (CUT 1); the sequence is DGAGPEEEQL…VLALRTIQVR (88 aa). A coiled-coil region spans residues 587 to 655; sequence DAIKSILEQA…QQALLEMESG (69 aa). Positions 608 to 628 are enriched in polar residues; it reads SKNSPASVSIPNGTASSSTSE. Low complexity-rich tracts occupy residues 743–757, 910–928, and 965–976; these read YASV…SSYS, QAPT…EPTS, and SSSLGGKPFSSS. The segment at residues 828–915 is a DNA-binding region (CUT 2); it reads QYELYMYREV…QGQGQAPTQQ (88 aa). The CUT 3 DNA-binding region spans 983 to 1070; that stretch reads QEMVAMSPEL…VEKLRDMKKL (88 aa). The segment at residues 1113–1172 is a DNA-binding region (homeobox); the sequence is AKKPRVVLAPAEKEALRKAYQLEPYPSQQTIELLSFQLNLKTNTVINWFHNYRSRMRREM. A disordered region spans residues 1177 to 1392; that stretch reads TQDDPDFDPS…AALHPSTKVN (216 aa). Composition is skewed to basic and acidic residues over residues 1233–1245 and 1260–1274; these read APDR…KQEE and DPDR…EHTH. A compositionally biased stretch (low complexity) spans 1318-1332; it reads LSFKSTSESSCCSLE. Residues 1338–1350 are compositionally biased toward polar residues; sequence PSVISSPDLTTCV. Over residues 1351 to 1364 the composition is skewed to low complexity; that stretch reads SPAPSSSAPISPSL.

It belongs to the CUT homeobox family. Restricted to neural tissues. Expressed exclusively in the central and peripheral nervous systems.

Its subcellular location is the nucleus. Functionally, transcription factor involved in the control of neuronal proliferation and differentiation in the brain. Regulates dendrite development and branching, dendritic spine formation, and synaptogenesis in cortical layers II-III. Binds to DNA in a sequence-specific manner. The polypeptide is Homeobox protein cut-like 2 (Cux2) (Mus musculus (Mouse)).